The primary structure comprises 251 residues: Hydroxyacylglutathione hydrolase (251 aa).

7 residues coordinate Zn(2+): His-53, His-55, Asp-57, His-58, His-110, Asp-127, and His-165.

Belongs to the metallo-beta-lactamase superfamily. Glyoxalase II family. In terms of assembly, monomer. It depends on Zn(2+) as a cofactor.

The catalysed reaction is an S-(2-hydroxyacyl)glutathione + H2O = a 2-hydroxy carboxylate + glutathione + H(+). It functions in the pathway secondary metabolite metabolism; methylglyoxal degradation; (R)-lactate from methylglyoxal: step 2/2. In terms of biological role, thiolesterase that catalyzes the hydrolysis of S-D-lactoyl-glutathione to form glutathione and D-lactic acid. In Pectobacterium carotovorum subsp. carotovorum (strain PC1), this protein is Hydroxyacylglutathione hydrolase.